Here is a 550-residue protein sequence, read N- to C-terminus: Eukaryotic translation initiation factor 3 subunit D-2 (550 aa).

A disordered region spans residues 108-152 (RTRGRTGRGTPNIASLGGSTAGGATASTTKYGKGRHTRNTQNVGR). The segment covering 115–136 (RGTPNIASLGGSTAGGATASTT) has biased composition (low complexity). Positions 290 to 304 (QFDLLTVNETSVEPP) are RNA gate. Residues 527–550 (PENAFDSDRDEEESSEPLSNSNDN) form a disordered region.

It belongs to the eIF-3 subunit D family. Component of the eukaryotic translation initiation factor 3 (eIF-3) complex. The eIF-3 complex interacts with pix.

It is found in the cytoplasm. Its function is as follows. mRNA cap-binding component of the eukaryotic translation initiation factor 3 (eIF-3) complex, which is involved in protein synthesis of a specialized repertoire of mRNAs and, together with other initiation factors, stimulates binding of mRNA and methionyl-tRNAi to the 40S ribosome. The eIF-3 complex specifically targets and initiates translation of a subset of mRNAs involved in cell proliferation. In the eIF-3 complex, eif3d specifically recognizes and binds the 7-methylguanosine cap of a subset of mRNAs. This is Eukaryotic translation initiation factor 3 subunit D-2 from Drosophila sechellia (Fruit fly).